An 844-amino-acid chain; its full sequence is Bifunctional abietadiene synthase, chloroplastic (844 aa).

Residues 1–46 (QSIPHFSTTLNAGSSARKRRSLYLRWGKGSNKIIACVGEGATSVPY) constitute a chloroplast transit peptide. Lysine 245 contacts substrate. Mg(2+) is bound by residues aspartate 378 and aspartate 380. A DXDD motif motif is present at residues 378–381 (DIDD). Lysine 465 provides a ligand contact to substrate. Residues aspartate 597, aspartate 601, asparagine 741, threonine 745, and glutamate 749 each coordinate Mg(2+). The DDXXD motif motif lies at 597–601 (DDLYD).

This sequence belongs to the terpene synthase family. Tpsd subfamily. Monomer. Mg(2+) serves as cofactor.

It is found in the plastid. The protein localises to the chloroplast. It catalyses the reaction (2E,6E,10E)-geranylgeranyl diphosphate = (+)-copalyl diphosphate. The enzyme catalyses (+)-copalyl diphosphate = abieta-7,13-diene + diphosphate. The catalysed reaction is (+)-copalyl diphosphate = neoabietadiene + diphosphate. It carries out the reaction (+)-copalyl diphosphate = abieta-8(14),12-diene + diphosphate. It participates in terpene metabolism; oleoresin biosynthesis. In terms of biological role, involved in defensive oleoresin formation in conifers in response to insect attack or other injury. Involved in diterpene (C20) olefins biosynthesis. Bifunctional enzyme that catalyzes two sequential cyclizations of geranylgeranyl diphosphate (GGPP) to abietadiene. The copalyl diphosphate (CPP) intermediate diffuses freely between the 2 active sites in the enzyme. The sequence is that of Bifunctional abietadiene synthase, chloroplastic (LAS) from Abies balsamea (Balsam fir).